The primary structure comprises 324 residues: IDS-like terpene synthase 2 (324 aa).

Positions 77 and 81 each coordinate Mg(2+).

This sequence belongs to the FPP/GGPP synthase family. It depends on Mg(2+) as a cofactor.

The catalysed reaction is (2E)-geranyl diphosphate = (E)-beta-ocimene + diphosphate. The enzyme catalyses (2E,6E)-farnesyl diphosphate = (3E,6E)-alpha-farnesene + diphosphate. It catalyses the reaction (2E,6E,10E)-geranylgeranyl diphosphate = (E,E,E)-alpha-springene + diphosphate. Terpene synthase that shows monoterpene synthase activity and produces (E)-beta-ocimene as a major product, using geranyl diphosphate (GPP) as substrate. Also shows sesquiterpene synthase activity as it is able to convert farnesyl diphosphate (FPP) into (E,E)-alpha-farnesene. Finally, TPS2 can convert geranylgeranyl diphosphate into (E,E,E)-alpha-springene. The sequence is that of IDS-like terpene synthase 2 from Melampsora lini (Rust fungus).